The sequence spans 260 residues: Hydroxyethylthiazole kinase (260 aa).

Met-38 serves as a coordination point for substrate. The ATP site is built by Lys-114 and Ser-161. Residue Gly-188 coordinates substrate.

This sequence belongs to the Thz kinase family. Requires Mg(2+) as cofactor.

It catalyses the reaction 5-(2-hydroxyethyl)-4-methylthiazole + ATP = 4-methyl-5-(2-phosphooxyethyl)-thiazole + ADP + H(+). It participates in cofactor biosynthesis; thiamine diphosphate biosynthesis; 4-methyl-5-(2-phosphoethyl)-thiazole from 5-(2-hydroxyethyl)-4-methylthiazole: step 1/1. Functionally, catalyzes the phosphorylation of the hydroxyl group of 4-methyl-5-beta-hydroxyethylthiazole (THZ). This Campylobacter lari (strain RM2100 / D67 / ATCC BAA-1060) protein is Hydroxyethylthiazole kinase.